We begin with the raw amino-acid sequence, 78 residues long: MSNLRLTIAVFLAALFQTLWWKPRGKRPQSNFHAKRIRTVLQTLLVMLCTDYRCDKGLCKCHGFGGEKENPTAAPLTA.

Residues 1 to 21 (MSNLRLTIAVFLAALFQTLWW) form the signal peptide.

The protein belongs to the DEFL family.

It localises to the secreted. The chain is Putative defensin-like protein 288 from Arabidopsis thaliana (Mouse-ear cress).